Consider the following 443-residue polypeptide: MTHIQLDFSKTLEFFGEHELKQQQEIVKSIHKTIHEGTGAGSDFLGWVDLPVDYDKEEFSRIVEASKRIKENSDVLVVIGIGGSYLGARAAIEMLTSSFRNSNEYPEIVFVGNHLSSTYTKELVDYLADKDFSVNVISKSGTTTEPAVAFRLFKQLVEERYGKEEAQKRIFATTDKEKGALKQLATNEGYETFIVPDDVGGRYSVLTAVGLLPIATAGINIEAMMIGAAKAREELSSDKLEENIAYQYATIRNILYAKGYTTEMLINYEPSMQYFNEWWKQLFGESEGKDFKGIYPSSANYTTDLHSLGQYVQEGRRFLFETVVKVNHPKYDITIEKDSDDLDGLNYLAGKTIDEVNTKAFEGTLLAHTDGGVPNMVVNIPQLDEETFGYVVYFFELACAMSGYQLGVNPFNQPGVEAYKQNMFALLGKPGFEDLKKELEERL.

Glutamate 285 acts as the Proton donor in catalysis. Catalysis depends on residues histidine 306 and lysine 420.

Belongs to the GPI family.

It is found in the cytoplasm. It catalyses the reaction alpha-D-glucose 6-phosphate = beta-D-fructose 6-phosphate. It functions in the pathway carbohydrate biosynthesis; gluconeogenesis. It participates in carbohydrate degradation; glycolysis; D-glyceraldehyde 3-phosphate and glycerone phosphate from D-glucose: step 2/4. Functionally, catalyzes the reversible isomerization of glucose-6-phosphate to fructose-6-phosphate. The polypeptide is Glucose-6-phosphate isomerase (Staphylococcus aureus (strain USA300)).